Consider the following 51-residue polypeptide: Lantibiotic streptococcin A-FF22 (51 aa).

Residues Met1–Ala25 constitute a propeptide that is removed on maturation. 2 consecutive cross-links (beta-methyllanthionine (Thr-Cys)) follow at residues Thr33–Cys38 and Thr42–Cys50. The segment at residues Ser35–Cys49 is a cross-link (lanthionine (Ser-Cys)). Thr48 carries the post-translational modification 2,3-didehydrobutyrine.

Belongs to the type A lantibiotic family. Maturation of lantibiotics involves the enzymatic conversion of Thr, and Ser into dehydrated AA and the formation of thioether bonds with cysteine. This is followed by membrane translocation and cleavage of the modified precursor.

Its subcellular location is the secreted. The protein resides in the cell surface. Lanthionine-containing peptide antibiotic (lantibiotic) active on certain Gram-positive bacteria. The bactericidal activity of lantibiotics is based on depolarization of energized bacterial cytoplasmic membranes, initiated by the formation of aqueous transmembrane pores. The protein is Lantibiotic streptococcin A-FF22 (scnA) of Streptococcus pyogenes.